The following is a 273-amino-acid chain: Undecaprenyl-diphosphatase (273 aa).

A run of 8 helical transmembrane segments spans residues 4-24, 45-65, 84-104, 112-132, 149-169, 187-207, 219-239, and 251-271; these read IELLKVIFLGIVEGITEWLPI, FMSMFNVVIQLGAILAVVVLF, TFTLWFKIVVACIPGIVMIPF, FFNPQTIATTLILYGILFIII, ITYQMAFMIGLFQILAMIPGT, YVAAEFTFFLAIPTMFGASLL, AEIVALITGMLTAFIVSIIVI, and FKVFGWYRIVLGAIVAGYFLL.

The protein belongs to the UppP family.

The protein resides in the cell membrane. It carries out the reaction di-trans,octa-cis-undecaprenyl diphosphate + H2O = di-trans,octa-cis-undecaprenyl phosphate + phosphate + H(+). In terms of biological role, catalyzes the dephosphorylation of undecaprenyl diphosphate (UPP). Confers resistance to bacitracin. This chain is Undecaprenyl-diphosphatase, found in Lachnoclostridium phytofermentans (strain ATCC 700394 / DSM 18823 / ISDg) (Clostridium phytofermentans).